Consider the following 520-residue polypeptide: Cholesterol side-chain cleavage enzyme, mitochondrial (520 aa).

The N-terminal 39 residues, 1–39 (MLARGLPFRSALVKACPPLLNTGREGWGHHRVGTGEGAG), are a transit peptide targeting the mitochondrion. The tract at residues 27 to 47 (WGHHRVGTGEGAGISTRTPRP) is disordered. C461 contacts heme.

This sequence belongs to the cytochrome P450 family. As to quaternary structure, interacts with FDX1/adrenodoxin. The cofactor is heme.

Its subcellular location is the mitochondrion inner membrane. The enzyme catalyses 6 reduced [adrenodoxin] + cholesterol + 3 O2 + 6 H(+) = 4-methylpentanal + pregnenolone + 6 oxidized [adrenodoxin] + 4 H2O. It carries out the reaction 2 reduced [adrenodoxin] + cholesterol + O2 + 2 H(+) = (22R)-hydroxycholesterol + 2 oxidized [adrenodoxin] + H2O. It catalyses the reaction (22R)-hydroxycholesterol + 2 reduced [adrenodoxin] + O2 + 2 H(+) = (20R,22R)-20,22-dihydroxycholesterol + 2 oxidized [adrenodoxin] + H2O. The catalysed reaction is (20R,22R)-20,22-dihydroxycholesterol + 2 reduced [adrenodoxin] + O2 + 2 H(+) = 4-methylpentanal + pregnenolone + 2 oxidized [adrenodoxin] + 2 H2O. Its pathway is lipid metabolism; C21-steroid hormone metabolism. The protein operates within steroid metabolism; cholesterol metabolism. A cytochrome P450 monooxygenase that catalyzes the side-chain hydroxylation and cleavage of cholesterol to pregnenolone, the precursor of most steroid hormones. Catalyzes three sequential oxidation reactions of cholesterol, namely the hydroxylation at C22 followed with the hydroxylation at C20 to yield 20R,22R-hydroxycholesterol that is further cleaved between C20 and C22 to yield the C21-steroid pregnenolone and 4-methylpentanal. Mechanistically, uses molecular oxygen inserting one oxygen atom into a substrate and reducing the second into a water molecule. Two electrons are provided by NADPH via a two-protein mitochondrial transfer system comprising flavoprotein FDXR (adrenodoxin/ferredoxin reductase) and nonheme iron-sulfur protein FDX1 or FDX2 (adrenodoxin/ferredoxin). This is Cholesterol side-chain cleavage enzyme, mitochondrial from Ovis aries (Sheep).